The chain runs to 65 residues: Large ribosomal subunit protein uL29 (65 aa).

This sequence belongs to the universal ribosomal protein uL29 family.

In Psychrobacter arcticus (strain DSM 17307 / VKM B-2377 / 273-4), this protein is Large ribosomal subunit protein uL29.